Consider the following 1032-residue polypeptide: MAETNNECSIKVLCRFRPLNQAEILRGDKFIPIFQGDDSVVIGGKPYVFDRVFPPNTTQEQVYHACAMQIVKDVLAGYNGTIFAYGQTSSGKTHTMEGKLHDPQLMGIIPRIARDIFNHIYSMDENLEFHIKVSYFEIYLDKIRDLLDVTKTNLSVHEDKNRVPFVKGCTERFVSGPEEILDVIDEGKSNRHVAVTNMNEHSSRSHSIFLINIKQENMETEQKLSGKLYLVDLAGSEKVSKTGAEGAVLDEAKNINKSLSALGNVISALAEGTKSYVPYRDSKMTRILQDSLGGNCRTTMFICCSPSSYNDAETKSTLMFGQRAKTIKNTASVNLELTAEQWKKKYEKEKEKTKAQKETIAKLEAELSRWRNGENVPETERLAGEEAALGAELCEETPVNDNSSIVVRIAPEERQKYEEEIRRLYKQLDDKDDEINQQSQLIEKLKQQMLDQEELLVSTRGDNEKVQQELSHLQSENDAAKDEVKEVLQALEELAVNYDQKSQEVEEKSQQNQLLVDELSQKVATMLSLESELQRLQEVSGHQRKRIAEVLNGLMKDLSEFSVIVGNGEIKLPVEISGAIEEEFTVARLYISKIKSEVKSVVKRCRQLENLQVERHRKMEVTGRELSSCQLLISQHEAKIRSLTEYMQSVELKKRHLEESYDSLSDELAKLQAQETVHEVALKDKEPDTQDADEVKKALELQMESHREAHHRQLARLRDEINEKQKTIDELKDLNQKLQLELEKLQADYEKLKSEEHEKSTKLQELTFLYERHEQSKQDLKGLEETVARELQTLHNLRKLFVQDVTTRVKKSAEMEPEDSGGIHSQKQKISFLENNLEQLTKVHKQLVRDNADLRCELPKLEKRLRATAERVKALEGALKEAKEGAMKDKRRYQQEVDRIKEAVRYKSSGKRGHSAQIAKPVRPGHYPASSPTNPYGTRSPECISYTNSLFQNYQNLYLQATPSSTSDMYFANSCTGSGATSSGGPLASYQKANMDNGNATDIKDNRSDLPCGYEAEDQAKLFPLHQETAAS.

Position 2 is an N-acetylalanine (Ala2). In terms of domain architecture, Kinesin motor spans 9–327; sequence SIKVLCRFRP…LMFGQRAKTI (319 aa). 86–93 serves as a coordination point for ATP; it reads GQTSSGKT. The tract at residues 174 to 315 is microtubule-binding; the sequence is VSGPEEILDV…PSSYNDAETK (142 aa). The interval 271 to 361 is necessary for interaction with ZFYVE27; the sequence is EGTKSYVPYR…KTKAQKETIA (91 aa). Residues 331–906 adopt a coiled-coil conformation; that stretch reads ASVNLELTAE…VDRIKEAVRY (576 aa). The segment at 353-1032 is interaction with BICD2; it reads TKAQKETIAK…FPLHQETAAS (680 aa). Thr397 carries the post-translational modification Phosphothreonine. The tract at residues 904 to 939 is disordered; it reads VRYKSSGKRGHSAQIAKPVRPGHYPASSPTNPYGTR. A globular region spans residues 907 to 1032; sequence KSSGKRGHSA…FPLHQETAAS (126 aa).

This sequence belongs to the TRAFAC class myosin-kinesin ATPase superfamily. Kinesin family. Kinesin subfamily. In terms of assembly, oligomer composed of two heavy chains and two light chains. Interacts with GRIP1. Interacts with FMR1 (via C-terminus); this interaction is increased in a mGluR-dependent manner. Interacts with BORCS5. Interacts with ZFYVE27. Interacts with VAPA, VAPB, SURF4, RAB11A (GDP-bound form), RAB11B (GDP-bound form) and RTN3 in a ZFYVE27-dependent manner. Interacts with BICD2. Interacts with DTNB.

Its subcellular location is the cytoplasm. The protein localises to the perinuclear region. It localises to the cytoskeleton. The protein resides in the perikaryon. It catalyses the reaction ATP + H2O + a kinesin associated with a microtubule at position (n) = ADP + phosphate a kinesin associated with a microtubule at position (n+1, toward the plus end).. In terms of biological role, microtubule-dependent motor required for slow axonal transport of neurofilament proteins (NFH, NFM and NFL). Can induce formation of neurite-like membrane protrusions in non-neuronal cells in a ZFYVE27-dependent manner. The ZFYVE27-KIF5A complex contributes to the vesicular transport of VAPA, VAPB, SURF4, RAB11A, RAB11B and RTN3 proteins in neurons. Required for anterograde axonal transportation of MAPK8IP3/JIP3 which is essential for MAPK8IP3/JIP3 function in axon elongation. This Pongo abelii (Sumatran orangutan) protein is Kinesin heavy chain isoform 5A (KIF5A).